The sequence spans 317 residues: Beta-ketoacyl-[acyl-carrier-protein] synthase III (317 aa).

Residues Cys-112 and His-244 contribute to the active site. Residues 245–249 form an ACP-binding region; sequence QANLR. Residue Asn-274 is part of the active site.

The protein belongs to the thiolase-like superfamily. FabH family. In terms of assembly, homodimer.

The protein localises to the cytoplasm. The enzyme catalyses malonyl-[ACP] + acetyl-CoA + H(+) = 3-oxobutanoyl-[ACP] + CO2 + CoA. It functions in the pathway lipid metabolism; fatty acid biosynthesis. In terms of biological role, catalyzes the condensation reaction of fatty acid synthesis by the addition to an acyl acceptor of two carbons from malonyl-ACP. Catalyzes the first condensation reaction which initiates fatty acid synthesis and may therefore play a role in governing the total rate of fatty acid production. Possesses both acetoacetyl-ACP synthase and acetyl transacylase activities. Its substrate specificity determines the biosynthesis of branched-chain and/or straight-chain of fatty acids. This Sodalis glossinidius (strain morsitans) protein is Beta-ketoacyl-[acyl-carrier-protein] synthase III.